The primary structure comprises 237 residues: Ribonuclease PH (237 aa).

Residues R86 and 124-126 (GTR) contribute to the phosphate site.

It belongs to the RNase PH family. As to quaternary structure, homohexameric ring arranged as a trimer of dimers.

It carries out the reaction tRNA(n+1) + phosphate = tRNA(n) + a ribonucleoside 5'-diphosphate. Phosphorolytic 3'-5' exoribonuclease that plays an important role in tRNA 3'-end maturation. Removes nucleotide residues following the 3'-CCA terminus of tRNAs; can also add nucleotides to the ends of RNA molecules by using nucleoside diphosphates as substrates, but this may not be physiologically important. Probably plays a role in initiation of 16S rRNA degradation (leading to ribosome degradation) during starvation. This Cereibacter sphaeroides (strain ATCC 17029 / ATH 2.4.9) (Rhodobacter sphaeroides) protein is Ribonuclease PH.